The primary structure comprises 306 residues: MELKDYYAIMGVKPTDDLKTIKTAYRRLARKYHPDVSKEPDAEARFKEVAEAWEVLSDEQRRAEYDQMWQHRNDPQFSRQFQHGDGQSFNAEDFDDIFSSIFGQHARQSRQRPAARGHDIEIEVAVFLEETLTEHKRTISYNLPVYNAFGMIEQEIPKTLNVKIPAGVGNGQRIRLKGQGTPGENGGPNGDLWLVIHIAPHPLFDIVGQDLEIVVPVSPWEAALGAKVTVPTLKESILLTIPPGSQAGQRLRVKGKGLVSKKQTGDLYAVLKIVMPPKPDENTAALWQQLADAQSSFDPRKDWGKA.

A J domain is found at 5 to 69 (DYYAIMGVKP…QRRAEYDQMW (65 aa)).

The protein resides in the cytoplasm. It localises to the nucleoid. Functionally, DNA-binding protein that preferentially recognizes a curved DNA sequence. It is probably a functional analog of DnaJ; displays overlapping activities with DnaJ, but functions under different conditions, probably acting as a molecular chaperone in an adaptive response to environmental stresses other than heat shock. Lacks autonomous chaperone activity; binds native substrates and targets them for recognition by DnaK. Its activity is inhibited by the binding of CbpM. The protein is Curved DNA-binding protein of Escherichia coli O157:H7.